A 175-amino-acid polypeptide reads, in one-letter code: MDKLADLNYTLSVITLMNDTLHSIIQDPGMAYFPYIASVLTVLFTLHKASIPTMKIALKTSKCSYKVIKYCIVTIINTLLKLAGYKEQVTTKDEIEQQMDRIVKEMRRQLEMIDKLTTREIEQVELLKRIHDNLITRPVDVIDMSKEFNQKNIKTLDEWESGKNPYEPSEVTASM.

Topologically, residues 1 to 28 (MDKLADLNYTLSVITLMNDTLHSIIQDP) are lumenal. N-linked (GlcNAc...) asparagine; by host glycans are attached at residues Asn8 and Asn18. The helical; Signal-anchor for type III membrane protein transmembrane segment at 29 to 51 (GMAYFPYIASVLTVLFTLHKASI) threads the bilayer. The Cytoplasmic segment spans residues 52 to 175 (PTMKIALKTS…YEPSEVTASM (124 aa)). Glu120 and Gln123 together coordinate Ca(2+).

It belongs to the rotavirus NSP4 family. In terms of assembly, homotetramer. Interacts with the immature particle in the viroplasm. Interacts with host CAV1, early and late in infection. Interacts with host integrin ITGA1/ITGB1 heterodimer. Interacts with host integrin ITGA2/ITGB1 heterodimer. Interaction with microtubules blocks trafficking to the Golgi apparatus. In terms of processing, the N-glycosyl content is primarily Man(9)GlcNAc, with a small amount of Man(8)GlcNAc.

It localises to the host rough endoplasmic reticulum membrane. It is found in the host membrane. The protein resides in the host caveola. Its subcellular location is the secreted. Functionally, plays an essential role in the virus replication cycle by acting as a viroporin. Creates a pore in the host endoplasmic reticulum and as a consequence releases Ca(2+) in the cytoplasm of infected cell. In turn, high levels of cytoplasmic calcium trigger membrane trafficking and transport of viral ER-associated proteins to viroplasms, sites of viral genome replication and immature particle assembly. The secreted form acts as an enterotoxin that causes phospholipase C-dependent elevation of the intracellular calcium concentration in host intestinal mucosa cells. Increased concentration of intracellular calcium disrupts the cytoskeleton and the tight junctions, raising the paracellular permeability. Potentiates chloride ion secretion through a calcium ion-dependent signaling pathway, inducing age-dependent diarrhea. To perform this enterotoxigenic role in vivo, NSP4 is released from infected enterocytes in a soluble form capable of diffusing within the intestinal lumen and interacting with host plasma membrane receptors on neighboring epithelial cells such as integrins ITGA1/ITGB1 and ITGA2/ITGB1. The polypeptide is Non-structural glycoprotein 4 (Rotavirus A (strain RVA/Human/United States/D/1974/G1P1A[8]) (RV-A)).